A 286-amino-acid chain; its full sequence is MAASSSSLLLLHKPTYNFHFAASSVPTYINSARFRISSSIFPLDRRRRRRIWSVSGFKSMADLVKTNARRDGEDRFQALEQEAFISNSSSELQNELVSDAGDGIEAIANRLSKWIVAALFGSVLLLRHDGAALWAVIGSVSNSVLSVALKRILNQERPVATLRSDPGMPSSHAQSISFISVFSVFSVMEWLGTNVLSLFLSGFILALGSYFTWLRVSQKLHTTSQVVVGAIVGSVYSTLWYVTWNSLVLEAFTSTFSVQIALFLVAAASALGFAVYVLLNWFKDDR.

Residues 1-60 constitute a chloroplast transit peptide; it reads MAASSSSLLLLHKPTYNFHFAASSVPTYINSARFRISSSIFPLDRRRRRRIWSVSGFKSM. 5 consecutive transmembrane segments (helical) span residues 133-149, 173-193, 194-214, 226-246, and 260-280; these read LWAV…SVAL, AQSI…WLGT, NVLS…FTWL, VVVG…TWNS, and IALF…VLLN.

It belongs to the PA-phosphatase related phosphoesterase family. As to expression, expressed in root tips, root branch points, cotyledons and leaves.

Its subcellular location is the plastid. The protein localises to the chloroplast inner membrane. Its activity is regulated as follows. Inhibited by Mg(2+). Functionally, exhibits phosphatidate phosphatase (PAP) activity in vitro. May play a secondary role as PAP in plastids. This is Lipid phosphate phosphatase epsilon 2, chloroplastic (LPPE2) from Arabidopsis thaliana (Mouse-ear cress).